We begin with the raw amino-acid sequence, 246 residues long: Putative outer membrane protein YiaT (246 aa).

Residues 1–21 (MLINRNIVALFALPFMASATA) form the signal peptide.

Belongs to the MipA/OmpV family.

Its subcellular location is the cell outer membrane. This is Putative outer membrane protein YiaT (yiaT) from Escherichia coli O157:H7.